The following is a 313-amino-acid chain: 4-diphosphocytidyl-2-C-methyl-D-erythritol kinase (313 aa).

Lys-29 is an active-site residue. 113 to 123 (PMGGGVGGGSS) is a binding site for ATP. Asp-155 is an active-site residue.

The protein belongs to the GHMP kinase family. IspE subfamily.

It carries out the reaction 4-CDP-2-C-methyl-D-erythritol + ATP = 4-CDP-2-C-methyl-D-erythritol 2-phosphate + ADP + H(+). It participates in isoprenoid biosynthesis; isopentenyl diphosphate biosynthesis via DXP pathway; isopentenyl diphosphate from 1-deoxy-D-xylulose 5-phosphate: step 3/6. Functionally, catalyzes the phosphorylation of the position 2 hydroxy group of 4-diphosphocytidyl-2C-methyl-D-erythritol. In Haemophilus influenzae (strain ATCC 51907 / DSM 11121 / KW20 / Rd), this protein is 4-diphosphocytidyl-2-C-methyl-D-erythritol kinase.